We begin with the raw amino-acid sequence, 107 residues long: Thioredoxin (107 aa).

The Thioredoxin domain occupies 2–107; the sequence is SATPQVSDAS…TLASTLEKYL (106 aa). Cysteine 32 and cysteine 35 are joined by a disulfide.

This sequence belongs to the thioredoxin family.

Its function is as follows. Component of the thioredoxin-thioredoxin reductase system. Participates in various redox reactions through the reversible oxidation of its active center dithiol to a disulfide and catalyzes dithiol-disulfide exchange reactions. The protein is Thioredoxin (trxA) of Synechocystis sp. (strain ATCC 27184 / PCC 6803 / Kazusa).